A 750-amino-acid chain; its full sequence is Neprilysin (750 aa).

Over residues 1-14 (MGRSESQMDITDIN) the composition is skewed to polar residues. Residues 1–20 (MGRSESQMDITDINTPKPKK) are disordered. Gly2 carries the N-myristoyl glycine lipid modification. Over 2 to 28 (GRSESQMDITDINTPKPKKKQRWTPLE) the chain is Cytoplasmic. Phosphoserine is present on residues Ser4 and Ser6. Residues 16–23 (PKPKKKQR) carry the Stop-transfer sequence motif. The helical; Signal-anchor for type II membrane protein transmembrane segment at 29 to 51 (ISLSVLVLLLTVIAVTMIALYAT) threads the bilayer. Residues 52-750 (YDDGICKSSD…MNPEKKCRVW (699 aa)) lie on the Extracellular side of the membrane. One can recognise a Peptidase M13 domain in the interval 56 to 750 (ICKSSDCIKS…MNPEKKCRVW (695 aa)). Disulfide bonds link Cys57-Cys62, Cys80-Cys735, Cys88-Cys695, Cys143-Cys411, Cys234-Cys242, and Cys621-Cys747. Arg103 is an a peptide binding site. An N-linked (GlcNAc...) asparagine glycan is attached at Asn145. 3 N-linked (GlcNAc...) asparagine glycosylation sites follow: Asn285, Asn311, and Asn325. His584 contributes to the Zn(2+) binding site. The active site involves Glu585. His588 is a binding site for Zn(2+). Asn628 is a glycosylation site (N-linked (GlcNAc...) asparagine). Glu647 is a Zn(2+) binding site. Asp651 (proton donor) is an active-site residue.

This sequence belongs to the peptidase M13 family. The cofactor is Zn(2+). In terms of processing, myristoylation is a determinant of membrane targeting. Post-translationally, glycosylation at Asn-628 is necessary both for surface expression and neutral endopeptidase activity.

It is found in the cell membrane. It catalyses the reaction Preferential cleavage of polypeptides between hydrophobic residues, particularly with Phe or Tyr at P1'.. It carries out the reaction substance P + H2O = substance P(1-9) + L-Leu-L-Met-NH2. The enzyme catalyses substance P + H2O = substance P(1-7) + L-Phe-Gly-L-Leu-L-Met-NH2. The catalysed reaction is neurotensin + H2O = neurotensin(1-11) + L-isoleucyl-L-leucine. It catalyses the reaction neurotensin + H2O = neurotensin(1-10) + L-tyrosyl-L-isoleucyl-L-leucine. With respect to regulation, inhibited by mixanpril, an orally-active drug used for the treatment of hypertension. Thermolysin-like specificity, but is almost confined on acting on polypeptides of up to 30 amino acids. Biologically important in the destruction of opioid peptides such as Met- and Leu-enkephalins by cleavage of a Gly-Phe bond. Catalyzes cleavage of bradykinin, substance P and neurotensin peptides. Able to cleave angiotensin-1, angiotensin-2 and angiotensin 1-9. Involved in the degradation of atrial natriuretic factor (ANF) and brain natriuretic factor (BNP(1-32)). Displays UV-inducible elastase activity toward skin preelastic and elastic fibers. This chain is Neprilysin (MME), found in Oryctolagus cuniculus (Rabbit).